The chain runs to 368 residues: Agmatine deiminase (368 aa).

The Amidino-cysteine intermediate role is filled by C357.

This sequence belongs to the agmatine deiminase family. As to quaternary structure, homodimer.

It catalyses the reaction agmatine + H2O = N-carbamoylputrescine + NH4(+). It participates in amine and polyamine biosynthesis; putrescine biosynthesis via agmatine pathway; N-carbamoylputrescine from agmatine: step 1/1. Functionally, mediates the hydrolysis of agmatine into N-carbamoylputrescine in the arginine decarboxylase (ADC) pathway of putrescine biosynthesis, a basic polyamine. The chain is Agmatine deiminase from Ectopseudomonas mendocina (strain ymp) (Pseudomonas mendocina).